The sequence spans 96 residues: Uteroglobin (96 aa).

A signal peptide spans 1 to 21; it reads MKIAITMAVVMLSVCCSSASS.

The protein belongs to the secretoglobin family. Antiparallel homodimer; disulfide-linked. Interaction with LMBR1L is controversial.

The protein localises to the secreted. Functionally, binds phosphatidylcholine, phosphatidylinositol, polychlorinated biphenyls (PCB) and weakly progesterone, potent inhibitor of phospholipase A2. The chain is Uteroglobin (SCGB1A1) from Mesocricetus auratus (Golden hamster).